Here is a 291-residue protein sequence, read N- to C-terminus: Putative butyrophilin-like protein 10 pseudogene (291 aa).

The first 26 residues, 1-26, serve as a signal peptide directing secretion; that stretch reads MAVTCDPEAFLSICFVTLVFLQLPLA. The Ig-like V-type domain occupies 27–146; sequence SIWKADFDVT…GEATVQVQVA (120 aa). The Extracellular segment spans residues 27-254; sequence SIWKADFDVT…RSSQFTAWKA (228 aa). Cys-54 and Cys-128 are oxidised to a cystine. N-linked (GlcNAc...) asparagine glycosylation is present at Asn-59. A helical transmembrane segment spans residues 255 to 275; sequence ALPLILVAMGLVIAGGICIFW. Residues 276–291 are Cytoplasmic-facing; it reads KRQREKNKASLEEERE.

The protein belongs to the immunoglobulin superfamily. BTN/MOG family.

The protein resides in the membrane. The sequence is that of Putative butyrophilin-like protein 10 pseudogene from Homo sapiens (Human).